The following is a 1420-amino-acid chain: DNA-directed RNA polymerase subunit beta' (1420 aa).

Positions 72, 74, 87, and 90 each coordinate Zn(2+). Positions 462, 464, and 466 each coordinate Mg(2+). 4 residues coordinate Zn(2+): C816, C896, C903, and C906.

This sequence belongs to the RNA polymerase beta' chain family. The RNAP catalytic core consists of 2 alpha, 1 beta, 1 beta' and 1 omega subunit. When a sigma factor is associated with the core the holoenzyme is formed, which can initiate transcription. Mg(2+) is required as a cofactor. Requires Zn(2+) as cofactor.

The enzyme catalyses RNA(n) + a ribonucleoside 5'-triphosphate = RNA(n+1) + diphosphate. In terms of biological role, DNA-dependent RNA polymerase catalyzes the transcription of DNA into RNA using the four ribonucleoside triphosphates as substrates. This is DNA-directed RNA polymerase subunit beta' from Blochmanniella floridana.